Consider the following 64-residue polypeptide: MDDKTQTGNIDVRLLELLVCPLTKGPLEYDAEHGELISRKAKLAYPVRGGIPIMLPSEARSLTE.

This sequence belongs to the UPF0434 family.

The sequence is that of UPF0434 protein Oant_3286 from Brucella anthropi (strain ATCC 49188 / DSM 6882 / CCUG 24695 / JCM 21032 / LMG 3331 / NBRC 15819 / NCTC 12168 / Alc 37) (Ochrobactrum anthropi).